The sequence spans 150 residues: 3-hydroxyacyl-[acyl-carrier-protein] dehydratase FabZ (150 aa).

The active site involves His54.

This sequence belongs to the thioester dehydratase family. FabZ subfamily.

The protein resides in the cytoplasm. It catalyses the reaction a (3R)-hydroxyacyl-[ACP] = a (2E)-enoyl-[ACP] + H2O. Functionally, involved in unsaturated fatty acids biosynthesis. Catalyzes the dehydration of short chain beta-hydroxyacyl-ACPs and long chain saturated and unsaturated beta-hydroxyacyl-ACPs. This is 3-hydroxyacyl-[acyl-carrier-protein] dehydratase FabZ from Vibrio campbellii (strain ATCC BAA-1116).